An 89-amino-acid polypeptide reads, in one-letter code: Small ribosomal subunit protein uS17 (89 aa).

Belongs to the universal ribosomal protein uS17 family. In terms of assembly, part of the 30S ribosomal subunit.

Functionally, one of the primary rRNA binding proteins, it binds specifically to the 5'-end of 16S ribosomal RNA. This is Small ribosomal subunit protein uS17 from Baumannia cicadellinicola subsp. Homalodisca coagulata.